The following is a 648-amino-acid chain: MSLAASAGRGPGTMWSPTHVQVTVLQARGLRAKGPGGTSDAYAVIQVGKEKYATSVSERSLGAPVWREEATFELPPLLSSGTAPAAAAATLQLTVLHRALLGLDKFLGRAEVDLRELHRDQSRRKKQWYTLKSKPGKKDKERGEIEVDIQFMRNNMTASMFDLSMKDKSRNPFGKLKDKIKGKNKDNTSDTASAIVPSTTPSVDSDDESFSKDKKKKSKIKTLFSKPSLQKTPLSQSMSVLPTSKPDKVLLRPGDFQSRWGDEGDNEDESSSASEVMSQKRTSSTDHTQPNQSNFSLPKKEGLSFLGGLRSKNDSLSRSNVCINGNHVYMEQPEAKSEIRESSPSNSPSPQGFRKRHLFSSTENLAARSPKEPGEGGGMSSDRRLSDSSTKDSMKSMSLPSYRPLTTADSREGLSPANMEVATKETKDSKKQESKKSSLLSLVTGKKDVAKGSEGEPLPPVSEKEKGRKGVLVEAQLREEDLVRRPEKDAVPVASQWGSSQNPFEDAQISDLEASVESKCEPKPPVPVPRTPQTRAVKPRPHPVKPMNTTAPKITNSSLGTATIISENLINEALMKKYQPSDPAFAYAQLTHDELIQLVLKQKETISKKEFQVRELEDYIDNLLVRVMEETPNILRVPAQTGKKAGKM.

The C2 domain maps to 1-129; that stretch reads MSLAASAGRG…DQSRRKKQWY (129 aa). Basic and acidic residues predominate over residues 164–188; the sequence is SMKDKSRNPFGKLKDKIKGKNKDNT. 3 disordered regions span residues 164–470, 483–503, and 516–555; these read SMKD…GRKG, VRRPEKDAVPVASQWGSSQNP, and VESKCEPKPPVPVPRTPQTRAVKPRPHPVKPMNTTAPKIT. Positions 189–201 are enriched in polar residues; it reads SDTASAIVPSTTP. A phosphoserine mark is found at serine 205, serine 209, and serine 237. Polar residues-rich tracts occupy residues 227–242 and 271–296; these read PSLQKTPLSQSMSVLP and SSASEVMSQKRTSSTDHTQPNQSNFS. Serine 304, serine 319, serine 343, serine 345, serine 347, serine 349, serine 360, serine 361, and serine 386 each carry phosphoserine. Over residues 314-323 the composition is skewed to polar residues; it reads DSLSRSNVCI. Composition is skewed to basic and acidic residues over residues 381–394 and 422–436; these read SDRRLSDSSTKDSM and ATKETKDSKKQESKK. At serine 438 the chain carries Phosphoserine. Residues 445-454 are compositionally biased toward basic and acidic residues; sequence GKKDVAKGSE. Residues 576–638 enclose the FIP-RBD domain; the sequence is KKYQPSDPAF…EETPNILRVP (63 aa). The tract at residues 584 to 648 is necessary for interaction with RAB4A and RAB11A, subcellular location and endosomal recycling; sequence AFAYAQLTHD…AQTGKKAGKM (65 aa).

Homooligomer. Interacts with RAB11A, RAB11B, RAB25, RAB4A and RAB14.

It localises to the recycling endosome. The protein resides in the cytoplasmic vesicle. A Rab11 effector protein involved in the endosomal recycling process. Also involved in controlling membrane trafficking along the phagocytic pathway and in phagocytosis. Interaction with RAB14 may function in the process of neurite formation. This chain is Rab11 family-interacting protein 1, found in Rattus norvegicus (Rat).